The chain runs to 698 residues: Endogenous retrovirus group K member 9 Env polyprotein (698 aa).

The disordered stretch occupies residues 1–47 (MNPSEMQRKAPPRRRRHRNRAPLTHKMNKMVTSEEQMKLPSTKKAEP). Positions 1-89 (MNPSEMQRKA…ALMIVSMVVS (89 aa)) are cleaved as a signal peptide. The span at 10–20 (APPRRRRHRNR) shows a compositional bias: basic residues. Topologically, residues 90 to 631 (LPMPAGAAAA…NLNPVTWVKT (542 aa)) are extracellular. Asparagine 100, asparagine 128, asparagine 153, asparagine 273, asparagine 354, asparagine 371, and asparagine 460 each carry an N-linked (GlcNAc...) asparagine glycan. The tract at residues 465 to 485 (FIFTLIAVIMGLIAVTATAAV) is fusion peptide. Residues asparagine 506, asparagine 553, asparagine 565, and asparagine 584 are each glycosylated (N-linked (GlcNAc...) asparagine). The chain crosses the membrane as a helical span at residues 632–652 (IGSTTIINLILILVCLFCLLL). Residues 653–698 (VCRCTQQLRRDSDHRERAMMTMAVLSKRKGGNVGKSKRDQIVTVSV) are Cytoplasmic-facing.

Belongs to the beta type-B retroviral envelope protein family. HERV class-II K(HML-2) env subfamily. As to quaternary structure, the surface (SU) and transmembrane (TM) proteins form a heterodimer. SU and TM are attached by noncovalent interactions or by a labile interchain disulfide bond. Specific enzymatic cleavages in vivo yield the mature SU and TM proteins.

The protein localises to the cell membrane. It localises to the virion. Retroviral envelope proteins mediate receptor recognition and membrane fusion during early infection. Endogenous envelope proteins may have kept, lost or modified their original function during evolution. This endogenous envelope protein has lost its original fusogenic properties. Its function is as follows. SU mediates receptor recognition. Functionally, TM anchors the envelope heterodimer to the viral membrane through one transmembrane domain. The other hydrophobic domain, called fusion peptide, mediates fusion of the viral membrane with the target cell membrane. The chain is Endogenous retrovirus group K member 9 Env polyprotein (ERVK-9) from Homo sapiens (Human).